Here is a 546-residue protein sequence, read N- to C-terminus: Phosphomethylpyrimidine synthase (546 aa).

Positions 1-19 (MSTPSSRSQAPETVTTGPI) are enriched in polar residues. Residues 1–20 (MSTPSSRSQAPETVTTGPIQ) form a disordered region. Residues N146, M175, Y204, H240, 260-262 (SRG), 301-304 (DGLR), and E340 each bind substrate. H344 provides a ligand contact to Zn(2+). Y367 contacts substrate. H408 serves as a coordination point for Zn(2+). 3 residues coordinate [4Fe-4S] cluster: C488, C491, and C496.

It belongs to the ThiC family. [4Fe-4S] cluster is required as a cofactor.

It catalyses the reaction 5-amino-1-(5-phospho-beta-D-ribosyl)imidazole + S-adenosyl-L-methionine = 4-amino-2-methyl-5-(phosphooxymethyl)pyrimidine + CO + 5'-deoxyadenosine + formate + L-methionine + 3 H(+). It functions in the pathway cofactor biosynthesis; thiamine diphosphate biosynthesis. Its function is as follows. Catalyzes the synthesis of the hydroxymethylpyrimidine phosphate (HMP-P) moiety of thiamine from aminoimidazole ribotide (AIR) in a radical S-adenosyl-L-methionine (SAM)-dependent reaction. In Mycobacteroides abscessus (strain ATCC 19977 / DSM 44196 / CCUG 20993 / CIP 104536 / JCM 13569 / NCTC 13031 / TMC 1543 / L948) (Mycobacterium abscessus), this protein is Phosphomethylpyrimidine synthase.